Reading from the N-terminus, the 218-residue chain is Ribose-5-phosphate isomerase A (218 aa).

Residues 28 to 31, 81 to 84, and 94 to 97 each bind substrate; these read TGST, DGAD, and KGGG. Glu103 (proton acceptor) is an active-site residue. Substrate is bound at residue Lys121.

Belongs to the ribose 5-phosphate isomerase family. As to quaternary structure, homodimer.

It catalyses the reaction aldehydo-D-ribose 5-phosphate = D-ribulose 5-phosphate. It participates in carbohydrate degradation; pentose phosphate pathway; D-ribose 5-phosphate from D-ribulose 5-phosphate (non-oxidative stage): step 1/1. Functionally, catalyzes the reversible conversion of ribose-5-phosphate to ribulose 5-phosphate. In Shewanella piezotolerans (strain WP3 / JCM 13877), this protein is Ribose-5-phosphate isomerase A.